A 225-amino-acid chain; its full sequence is UPF0758 protein XAC3915 (225 aa).

The MPN domain occupies 102 to 224; it reads ALSDPPSVGR…PVSFAERGWL (123 aa). Zn(2+) is bound by residues histidine 173, histidine 175, and aspartate 186. The JAMM motif signature appears at 173 to 186; the sequence is HNHPSGNPEPSEAD.

Belongs to the UPF0758 family.

This chain is UPF0758 protein XAC3915, found in Xanthomonas axonopodis pv. citri (strain 306).